Here is a 371-residue protein sequence, read N- to C-terminus: MSL complex subunit 3B (371 aa).

2 disordered regions span residues 1 to 47 and 160 to 230; these read MATL…DERA and EERA…PQAK. The span at 8 to 47 shows a compositional bias: basic and acidic residues; that stretch reads PKDDGEGKDEGGSDRGDGDSKPKGKKEVEPHTRREADERA. Positions 44–367 constitute an MRG domain; the sequence is DERAMRIPIP…CEAHYSSKNP (324 aa). A compositionally biased stretch (low complexity) spans 183-193; it reads SESQAVAGPAA. Basic residues predominate over residues 206–216; the sequence is APRRSTRHSTH.

It localises to the nucleus. Probable non-catalytic component of the MSL histone acetyltransferase complex, a multiprotein complex that mediates the majority of histone H4 acetylation at 'Lys-16' (H4K16ac), an epigenetic mark that prevents chromatin compaction. This chain is MSL complex subunit 3B, found in Mus musculus (Mouse).